Reading from the N-terminus, the 545-residue chain is Carboxylesterase 5A (545 aa).

An N-terminal signal peptide occupies residues 1-28 (MSGMWVHPGRTLIWALWVLAAVIKGPAA). The N-linked (GlcNAc...) (complex) asparagine glycan is linked to Asn86. The cysteines at positions 94 and 121 are disulfide-linked. Asn134 carries an N-linked (GlcNAc...) asparagine glycan. Ser226 (acyl-ester intermediate) is an active-site residue. A disulfide bond links Cys281 and Cys292. The active-site Charge relay system is Glu346. Residues Asn363 and Asn443 are each glycosylated (N-linked (GlcNAc...) asparagine). The Charge relay system role is filled by His454.

This sequence belongs to the type-B carboxylesterase/lipase family. N-glycosylated; contains a fucosylated complex carbohydrate. As to expression, present at high level in urine. Expressed in the kidney proximal straight tubular cells and is secreted from the apical compartment of the cells into the urine (at protein level). In mature cats, it is present at higher level in intact males than in castrated males or in intact or spayed females.

It localises to the secreted. It carries out the reaction a carboxylic ester + H2O = an alcohol + a carboxylate + H(+). Its function is as follows. Carboxylesterase present at high level in urine that regulates production of felinine, a probable pheromone precursor. Probably acts by hydrolyzing the peptide bond of the felinine precursor 3-methylbutanol cyteinylglycine, producing felinine and glycine in cat urine. The polypeptide is Carboxylesterase 5A (CES5A) (Felis catus (Cat)).